Here is a 312-residue protein sequence, read N- to C-terminus: Ribosomal RNA small subunit methyltransferase H (312 aa).

S-adenosyl-L-methionine-binding positions include 35–37 (GGH), Asp-55, Asp-101, and Gln-108. The tract at residues 285-306 (ALKPSEHEVTENSRSRSSVLRV) is disordered. Residues 287 to 298 (KPSEHEVTENSR) show a composition bias toward basic and acidic residues.

The protein belongs to the methyltransferase superfamily. RsmH family.

The protein resides in the cytoplasm. It catalyses the reaction cytidine(1402) in 16S rRNA + S-adenosyl-L-methionine = N(4)-methylcytidine(1402) in 16S rRNA + S-adenosyl-L-homocysteine + H(+). In terms of biological role, specifically methylates the N4 position of cytidine in position 1402 (C1402) of 16S rRNA. In Aeromonas salmonicida (strain A449), this protein is Ribosomal RNA small subunit methyltransferase H.